Reading from the N-terminus, the 419-residue chain is DNA ligase (419 aa).

The interval 1-120 (MLNQFPGQLS…ARQKRGAHTN (120 aa)) is NTD. The AD domain stretch occupies residues 121-317 (RGMIPPMLVK…NYHSPHLAKL (197 aa)). Residue Lys-151 is the N6-AMP-lysine intermediate of the active site. An OB domain region spans residues 318–419 (KPLLDAEFIL…REPINVLEII (102 aa)).

It belongs to the ATP-dependent DNA ligase family.

It is found in the virion. The enzyme catalyses ATP + (deoxyribonucleotide)n-3'-hydroxyl + 5'-phospho-(deoxyribonucleotide)m = (deoxyribonucleotide)n+m + AMP + diphosphate.. In terms of biological role, very low-fidelity DNA ligase that seals nicks in double-stranded DNA during DNA repair. Together with the viral repair DNA polymerase X, fills the single nucleotide gaps generated by the AP endonuclease. It is not essential for viral replication and recombination. Displays a very low adenylation activity towards DNA with 3'-dideoxy- or 3'-amino-terminated nicks compared to regular nick DNA. The chain is DNA ligase from Ornithodoros (relapsing fever ticks).